We begin with the raw amino-acid sequence, 281 residues long: Nucleotide-binding protein TRQ2_1124 (281 aa).

ATP is bound at residue glycine 9–threonine 16. Aspartate 58–serine 61 serves as a coordination point for GTP.

This sequence belongs to the RapZ-like family.

Displays ATPase and GTPase activities. This chain is Nucleotide-binding protein TRQ2_1124, found in Thermotoga sp. (strain RQ2).